Here is a 554-residue protein sequence, read N- to C-terminus: Glucose-6-phosphate isomerase (554 aa).

Residue glutamate 358 is the Proton donor of the active site. Catalysis depends on residues histidine 389 and lysine 515. The span at 527–540 (ADNSPAPQSDSSTD) shows a compositional bias: polar residues. The tract at residues 527-554 (ADNSPAPQSDSSTDALVRRYRSERGRTS) is disordered. Residues 542 to 554 (LVRRYRSERGRTS) show a composition bias toward basic and acidic residues.

It belongs to the GPI family.

Its subcellular location is the cytoplasm. It carries out the reaction alpha-D-glucose 6-phosphate = beta-D-fructose 6-phosphate. It functions in the pathway carbohydrate biosynthesis; gluconeogenesis. The protein operates within carbohydrate degradation; glycolysis; D-glyceraldehyde 3-phosphate and glycerone phosphate from D-glucose: step 2/4. Its function is as follows. Catalyzes the reversible isomerization of glucose-6-phosphate to fructose-6-phosphate. The chain is Glucose-6-phosphate isomerase from Mycobacterium avium (strain 104).